Reading from the N-terminus, the 284-residue chain is Large ribosomal subunit protein uL2 (284 aa).

Disordered regions lie at residues 28–50 (ELKGSSSRRSVRPNKKLSFFKKS) and 232–284 (RGTA…DRRK). Residues 36-46 (RSVRPNKKLSF) show a composition bias toward basic residues. Residues 240 to 250 (DHPHGGGEGRH) show a composition bias toward basic and acidic residues. Basic residues predominate over residues 264–284 (KGLKTRDKRKSNKWIVKDRRK).

This sequence belongs to the universal ribosomal protein uL2 family. Part of the 50S ribosomal subunit. Forms a bridge to the 30S subunit in the 70S ribosome.

In terms of biological role, one of the primary rRNA binding proteins. Required for association of the 30S and 50S subunits to form the 70S ribosome, for tRNA binding and peptide bond formation. It has been suggested to have peptidyltransferase activity; this is somewhat controversial. Makes several contacts with the 16S rRNA in the 70S ribosome. In Chlamydia trachomatis serovar L2 (strain ATCC VR-902B / DSM 19102 / 434/Bu), this protein is Large ribosomal subunit protein uL2.